We begin with the raw amino-acid sequence, 83 residues long: Arminin 3a (83 aa).

The N-terminal stretch at 1–18 (MKTVFAILFLTFIALTCA) is a signal peptide. Residues 19–57 (RNYEDLKEKIKNEVEREIFEDLEEESDELENNFKKFNDA) constitute a propeptide that is removed on maturation. The residue at position 80 (alanine 80) is an Alanine amide.

It belongs to the arminin family. As to expression, expressed in entodermal epithelium along the body column.

The protein resides in the secreted. The protein localises to the target cell membrane. Antimicrobial peptide with a broad-spectrum antimicrobial activity. Keeps its antibacterial activity under a wide range of salt concentrations that mimic physiological conditions of human blood, which is surprising, since Hydra is an obligate freshwater animal with nearly no salt tolerance. Does not affect red blood cells. The polypeptide is Arminin 3a (Hydra vulgaris (Hydra)).